Consider the following 179-residue polypeptide: Apoptosis regulator Bcl-2 homolog (179 aa).

A BH1 motif is present at residues 76 to 95 (ELFKDLINWGRICGFIVFSA). A BH2 motif is present at residues 126–141 (PWMISHGGQEEFLAFS).

This sequence belongs to the Bcl-2 family. Interacts with host BECN1 (via BH3 homology domain); this interaction allows the virus to inhibit BECN1, and thus autophagy. Interacts with host BID. Interacts with host BAX.

The protein resides in the host mitochondrion. Its subcellular location is the host endoplasmic reticulum. Functionally, suppresses apoptosis in host cell to promote the viral replication. Has the ability to potentially bind to all the members of the proapoptotic Bcl-2 family. Inhibits autophagy by interacting with host Beclin 1 (BECN1). The sequence is that of Apoptosis regulator Bcl-2 homolog from Ornithodoros (relapsing fever ticks).